The chain runs to 212 residues: Guanylate kinase (212 aa).

A Guanylate kinase-like domain is found at 5–187 (GILCIISAPS…ALMHLQSIML (183 aa)). 12-19 (APSGTGKS) serves as a coordination point for ATP.

The protein belongs to the guanylate kinase family.

The protein localises to the cytoplasm. It carries out the reaction GMP + ATP = GDP + ADP. Essential for recycling GMP and indirectly, cGMP. The polypeptide is Guanylate kinase (Blochmanniella pennsylvanica (strain BPEN)).